A 407-amino-acid polypeptide reads, in one-letter code: 12S rRNA N(4)-cytidine methyltransferase METTL15 (407 aa).

S-adenosyl-L-methionine is bound by residues 100 to 102, Asp-119, Phe-146, Asp-169, and Gln-176; that span reads GGH. At Ser-358 the chain carries Phosphoserine.

The protein belongs to the methyltransferase superfamily. RsmH family.

The protein localises to the mitochondrion matrix. It carries out the reaction cytidine(839) in 12S rRNA + S-adenosyl-L-methionine = N(4)-methylcytidine(839) in 12S rRNA + S-adenosyl-L-homocysteine + H(+). In terms of biological role, N4-methylcytidine (m4C) methyltransferase responsible for the methylation of position C839 in mitochondrial 12S rRNA. Involved in the stabilization of 12S rRNA folding, therefore facilitating the assembly of the mitochondrial small ribosomal subunits. The sequence is that of 12S rRNA N(4)-cytidine methyltransferase METTL15 (METTL15) from Pongo abelii (Sumatran orangutan).